The sequence spans 246 residues: Triosephosphate isomerase (246 aa).

9 to 11 (NWK) contacts substrate. H99 serves as the catalytic Electrophile. E168 (proton acceptor) is an active-site residue. Residues G174, S207, and 228 to 229 (GG) contribute to the substrate site.

The protein belongs to the triosephosphate isomerase family. In terms of assembly, homodimer.

It is found in the cytoplasm. It catalyses the reaction D-glyceraldehyde 3-phosphate = dihydroxyacetone phosphate. It functions in the pathway carbohydrate biosynthesis; gluconeogenesis. It participates in carbohydrate degradation; glycolysis; D-glyceraldehyde 3-phosphate from glycerone phosphate: step 1/1. Its function is as follows. Involved in the gluconeogenesis. Catalyzes stereospecifically the conversion of dihydroxyacetone phosphate (DHAP) to D-glyceraldehyde-3-phosphate (G3P). The chain is Triosephosphate isomerase from Prochlorococcus marinus (strain NATL1A).